The chain runs to 200 residues: MLYYSGPVARLVDEFAKLPGIGPKTAQRLAFHVLNSPPELAQGLAKALVEVRQSIKRCSLCCNLTDEDPCSICQDTTRNSNLLCVVEEPRDVIAMEKARGYRGYYHVLHGAISPMEGIRPEDLTIKELLHRLQNGDIQEVILAANSDVEGETTALYLARLLKPLGVKVTRIAHGIPVGSDLEYADAMTLNKALEGRGEFG.

The segment at 58–73 (CSLCCNLTDEDPCSIC) adopts a C4-type zinc-finger fold. The 96-residue stretch at 81 to 176 (NLLCVVEEPR…KVTRIAHGIP (96 aa)) folds into the Toprim domain.

It belongs to the RecR family.

Its function is as follows. May play a role in DNA repair. It seems to be involved in an RecBC-independent recombinational process of DNA repair. It may act with RecF and RecO. The protein is Recombination protein RecR of Desulforamulus reducens (strain ATCC BAA-1160 / DSM 100696 / MI-1) (Desulfotomaculum reducens).